The primary structure comprises 114 residues: UPF0145 protein TT_C1581 (114 aa).

The protein belongs to the UPF0145 family.

The chain is UPF0145 protein TT_C1581 from Thermus thermophilus (strain ATCC BAA-163 / DSM 7039 / HB27).